The following is a 201-amino-acid chain: Small ribosomal subunit protein uS4c (201 aa).

The region spanning 89-157 (MRLDNILFRL…VQNYIASSDP (69 aa)) is the S4 RNA-binding domain.

Belongs to the universal ribosomal protein uS4 family. In terms of assembly, part of the 30S ribosomal subunit. Contacts protein S5. The interaction surface between S4 and S5 is involved in control of translational fidelity.

It localises to the plastid. The protein resides in the chloroplast. Its function is as follows. One of the primary rRNA binding proteins, it binds directly to 16S rRNA where it nucleates assembly of the body of the 30S subunit. Functionally, with S5 and S12 plays an important role in translational accuracy. The protein is Small ribosomal subunit protein uS4c (rps4) of Triticum aestivum (Wheat).